A 2969-amino-acid polypeptide reads, in one-letter code: MDPRNTAMLGLGSDSEGFSRKSPSAISTGTLVSKREVELEKNTKEEEDLRKRNRERNIEAGKDDGLTDAQQQFSVKETNFSEGNLKLKIGLQAKRTKKPPKNLENYVCRPAIKTTIKHPRKALKSGKMTDEKNEHCPSKRDPSKLYKKADDVAAIECQSEEVIRLHSQGENNPLSKKLSPVHSEMADYINATPSTLLGSRDPDLKDRALLNGGTSVTEKLAQLIATCPPSKSSKTKPKKLGTGTTAGLVSKDLIRKAGVGSVAGIIHKDLIKKPTISTAVGLVTKDPGKKPVFNAAVGLVNKDSVKKLGTGTTAVFINKNLGKKPGTITTVGLLSKDSGKKLGIGIVPGLVHKESGKKLGLGTVVGLVNKDLGKKLGSTVGLVAKDCAKKIVASSAMGLVNKDIGKKLMSCPLAGLISKDAINLKAEALLPTQEPLKASCSTNINNQESQELSESLKDSATSKTFEKNVVRQNKESILEKFSVRKEIINLEKEMFNEGTCIQQDSFSSSEKGSYETSKHEKQPPVYCTSPDFKMGGASDVSTAKSPFSAVGESNLPSPSPTVSVNPLTRSPPETSSQLAPNPLLLSSTTELIEEISESVGKNQFTSESTHLNVGHRSVGHSISIECKGIDKEVNDSKTTHIDIPRISSSLGKKPSLTSESSIHTITPSVVNFTSLFSNKPFLKLGAVSASDKHCQVAESLSTSLQSKPLKKRKGRKPRWTKVVARSTCRSPKGLELERSELFKNVSCSSLSNSNSEPAKFMKNIGPPSFVDHDFLKRRLPKLSKSTAPSLALLADSEKPSHKSFATHKLSSSMCVSSDLLSDIYKPKRGRPKSKEMPQLEGPPKRTLKIPASKVFSLQSKEEQEPPILQPEIEIPSFKQGLSVSPFPKKRGRPKRQMRSPVKMKPPVLSVAPFVATESPSKLESESDNHRSSSDFFESEDQLQDPDDLDDSHRPSVCSMSDLEMEPDKKITKRNNGQLMKTIIRKINKMKTLKRKKLLNQILSSSVESSNKGKVQSKLHNTVSSLAATFGSKLGQQINVSKKGTIYIGKRRGRKPKTVLNGILSGSPTSLAVLEQTAQQAAGSALGQILPPLLPSSASSSEILPSPICSQSSGTSGGQSPVSSDAGFVEPSSVPYLHLHSRQGSMIQTLAMKKASKGRRRLSPPTLLPNSPSHLSELTSLKEATPSPISESHSDETIPSDSGIGTDNNSTSDRAEKFCGQKKRRHSFEHVSLIPPETSTVLSSLKEKHKHKCKRRNHDYLSYDKMKRQKRKRKKKYPQLRNRQDPDFIAELEELISRLSEIRITHRSHHFIPRDLLPTIFRINFNSFYTHPSFPLDPLHYIRKPDLKKKRGRPPKMREAMAEMPFMHSLSFPLSSTGFYPSYGMPYSPSPLTAAPIGLGYYGRYPPTLYPPPPSPSFTTPLPPPSYMHAGHLLLNPAKYHKKKHKLLRQEAFLTTSRTPLLSMSTYPSVPPEMAYGWMVEHKHRHRHKHREHRSSEQPQVSMDTGSSRSVLESLKRYRFGKDAVGERYKHKEKHRCHMSCPHLSPSKSLINREEQWVHREPSESSPLALGLQTPLQIDCSESSPSLSLGGFTPNSEPASSDEHTNLFTSAIGSCRVSNPNSSGRKKLTDSPGLFSAQDTSLNRLHRKESLPSNERAVQTLAGSQPTSDKPSQRPSESTNCSPTRKRSSSESTSSTVNGVPSRSPRLVASGDDSVDSLLQRMVQNEDQEPMEKSIDAVIATASAPPSSSPGRSHSKDRTLGKPDSLLVPAVTSDSCNNSISLLSEKLTSSCSPHHIKRSVVEAMQRQARKMCNYDKILATKKNLDHVNKILKAKKLQRQARTGNNFVKRRPGRPRKCPLQAVVSMQAFQAAQFVNPELNRDEEGAALHLSPDTVTDVIEAVVQSVNLNPEHKKGLKRKGWLLEEQTRKKQKPLPEEEEQENNKSFNEAPVEIPSPSETPAKPSEPESTLQPVLSLIPREKKPPRPPKKKYQKAGLYSDVYKTTDPKSRLIQLKKEKLEYTPGEHEYGLFPAPIHVVFFVSGKYLRQKRIDFQLPYDILWQWKHNQLYKKPDVPLYKKIRSNVYVDVKPLSGYEATTCNCKKPDDDTRKGCVDDCLNRMIFAECSPNTCPCGEQCCNQRIQRHEWVQCLERFRAEEKGWGIRTKEPLKAGQFIIEYLGEVVSEQEFRNRMIEQYHNHSDHYCLNLDSGMVIDSYRMGNEARFINHSCDPNCEMQKWSVNGVYRIGLYALKDMPAGTELTYDYNFHSFNVEKQQLCKCGFEKCRGIIGGKSQRVNGLTSSKNSQPMATHKKSGRSKEKRKSKHKLKKRRGHLSEEPSENINTPTRLTPQLQMKPMSNRERNFVLKHHVFLVRNWEKIRQKQEEVKHTSDNIHSASLYTRWNGICRDDGNIKSDVFMTQFSALQTARSVRTRRLAAAEENIEVARAARLAQIFKEICDGIISYKDSSRQALAAPLLNLPPKKKNADYYEKISDPLDLITIEKQILTGYYKTVEAFDADMLKVFRNAEKYYGRKSPVGRDVCRLRKAYYNARHEASAQIDEIVGETASEADSSETSVSEKENGHEKDDDVIRCICGLYKDEGLMIQCDKCMVWQHCDCMGVNSDVEHYLCEQCDPRPVDREVPMIPRPHYAQPGCVYFICLLRDDLLLRQGDCVYLMRDSRRTPDGHPVRQSYRLLSHINRDKLDIFRIEKLWKNEKEERFAFGHHYFRPHETHHSPSRRFYHNELFRVPLYEIIPLEAVVGTCCVLDLYTYCKGRPKGVKEQDVYICDYRLDKSAHLFYKIHRNRYPVCTKPYAFDHFPKKLTPKKDFSPHYVPDNYKRNGGRSSWKSERSKPPLKDLGQEDDALPLIEEVLASQEQAANEIPSLEEPEREGATANVSEGEKKTEESSQEPQSTCTPEERRHNQRERLNQILLNLLEKIPGKNAIDVTYLLEEGSGRKLRRRTLFIPENSFRK.

Disordered regions lie at residues 1–70 (MDPR…TDAQ) and 118–143 (HPRKALKSGKMTDEKNEHCPSKRDPS). Residues 21–31 (KSPSAISTGTL) are compositionally biased toward polar residues. Serine 22 bears the Phosphoserine mark. 2 stretches are compositionally biased toward basic and acidic residues: residues 33 to 65 (SKREVELEKNTKEEEDLRKRNRERNIEAGKDDG) and 127 to 143 (KMTDEKNEHCPSKRDPS). Lysine 34 participates in a covalent cross-link: Glycyl lysine isopeptide (Lys-Gly) (interchain with G-Cter in SUMO2). Lysine 375 carries the post-translational modification N6-acetyllysine. Lysine 425 is covalently cross-linked (Glycyl lysine isopeptide (Lys-Gly) (interchain with G-Cter in SUMO2)). Over residues 501–511 (IQQDSFSSSEK) the composition is skewed to polar residues. Disordered stretches follow at residues 501–525 (IQQDSFSSSEKGSYETSKHEKQPPV), 537–583 (ASDV…PNPL), 824–845 (YKPKRGRPKSKEMPQLEGPPKR), 878–966 (KQGL…EMEP), 1100–1128 (SEILPSPICSQSSGTSGGQSPVSSDAGFV), 1151–1231 (MKKA…EHVS), and 1243–1281 (SLKEKHKHKCKRRNHDYLSYDKMKRQKRKRKKKYPQLRN). Residues 512–522 (GSYETSKHEKQ) are compositionally biased toward basic and acidic residues. The segment covering 554 to 579 (NLPSPSPTVSVNPLTRSPPETSSQLA) has biased composition (polar residues). Residues 887-897 (PKKRGRPKRQM) are compositionally biased toward basic residues. A DNA-binding region (a.T hook 1) is located at residues 887-899 (PKKRGRPKRQMRS). Over residues 920–932 (SKLESESDNHRSS) the composition is skewed to basic and acidic residues. The segment covering 936–949 (FESEDQLQDPDDLD) has biased composition (acidic residues). Low complexity-rich tracts occupy residues 1100 to 1123 (SEILPSPICSQSSGTSGGQSPVSS) and 1162 to 1175 (SPPTLLPNSPSHLS). 2 positions are modified to phosphoserine: serine 1162 and serine 1170. Over residues 1186–1211 (SPISESHSDETIPSDSGIGTDNNSTS) the composition is skewed to polar residues. At glutamine 1220 the chain carries N5-methylglutamine. Composition is skewed to basic residues over residues 1246–1256 (EKHKHKCKRRN) and 1266–1277 (KRQKRKRKKKYP). The a.T hook 2 DNA-binding region spans 1347-1359 (KKKRGRPPKMREA). 3 disordered regions span residues 1489–1508 (HREHRSSEQPQVSMDTGSSR), 1580–1711 (SESS…ASGD), and 1741–1761 (ASAPPSSSPGRSHSKDRTLGK). Polar residues-rich tracts occupy residues 1496 to 1508 (EQPQVSMDTGSSR), 1580 to 1598 (SESSPSLSLGGFTPNSEPA), 1605 to 1622 (NLFTSAIGSCRVSNPNSS), and 1650 to 1680 (LPSNERAVQTLAGSQPTSDKPSQRPSESTNC). Residues 1741–1751 (ASAPPSSSPGR) show a composition bias toward low complexity. The a.T hook 3 DNA-binding region spans 1847-1859 (KRRPGRPRKCPLQ). Residues 1911–1991 (KKGLKRKGWL…PRPPKKKYQK (81 aa)) are disordered. Positions 2069 to 2288 (PDVPLYKKIR…KCRGIIGGKS (220 aa)) are catalytic domain. The AWS domain maps to 2091–2142 (YEATTCNCKKPDDDTRKGCVDDCLNRMIFAECSPNTCPCGEQCCNQRIQRHE). Positions 2145–2261 (QCLERFRAEE…AGTELTYDYN (117 aa)) constitute an SET domain. The region spanning 2269-2285 (KQQLCKCGFEKCRGIIG) is the Post-SET domain. The tract at residues 2288–2346 (SQRVNGLTSSKNSQPMATHKKSGRSKEKRKSKHKLKKRRGHLSEEPSENINTPTRLTPQ) is disordered. The span at 2289 to 2303 (QRVNGLTSSKNSQPM) shows a compositional bias: polar residues. Residues 2305–2327 (THKKSGRSKEKRKSKHKLKKRRG) are compositionally biased toward basic residues. An N6-acetyllysine mark is found at lysine 2317, lysine 2319, and lysine 2323. Residues 2335–2346 (ENINTPTRLTPQ) are compositionally biased toward polar residues. The region spanning 2444 to 2550 (RLAQIFKEIC…KAYYNARHEA (107 aa)) is the Bromo domain. The PHD-type zinc finger occupies 2585–2631 (VIRCICGLYKDEGLMIQCDKCMVWQHCDCMGVNSDVEHYLCEQCDPR). Positions 2661 to 2798 (LLLRQGDCVY…KSAHLFYKIH (138 aa)) constitute a BAH domain. Disordered stretches follow at residues 2825–2856 (SPHYVPDNYKRNGGRSSWKSERSKPPLKDLGQ) and 2876–2919 (NEIP…RRHN). Residues 2842–2855 (WKSERSKPPLKDLG) show a composition bias toward basic and acidic residues.

Belongs to the class V-like SAM-binding methyltransferase superfamily. Histone-lysine methyltransferase family. SET2 subfamily. Methylated at Gln-1220 by N6AMT1. As to expression, widely expressed, with highest level in brain, heart and kidney.

Its subcellular location is the nucleus. It is found in the cell junction. It localises to the tight junction. The protein localises to the chromosome. It carries out the reaction L-lysyl(36)-[histone H3] + 3 S-adenosyl-L-methionine = N(6),N(6),N(6)-trimethyl-L-lysyl(36)-[histone H3] + 3 S-adenosyl-L-homocysteine + 3 H(+). It catalyses the reaction L-lysyl(9)-[histone H3] + S-adenosyl-L-methionine = N(6)-methyl-L-lysyl(9)-[histone H3] + S-adenosyl-L-homocysteine + H(+). Functionally, histone methyltransferase specifically trimethylating 'Lys-36' of histone H3 forming H3K36me3. Also monomethylates 'Lys-9' of histone H3 (H3K9me1) in vitro. The physiological significance of the H3K9me1 activity is unclear. In Homo sapiens (Human), this protein is Histone-lysine N-methyltransferase ASH1L (ASH1L).